The primary structure comprises 447 residues: Argininosuccinate synthase (447 aa).

ATP-binding positions include 17–25 (AFSGGLDTS) and alanine 43. Tyrosine 99 is a binding site for L-citrulline. Positions 129 and 131 each coordinate ATP. Threonine 131, asparagine 135, and aspartate 136 together coordinate L-aspartate. L-citrulline is bound at residue asparagine 135. Position 136 (aspartate 136) interacts with ATP. L-citrulline is bound by residues arginine 139 and serine 192. Aspartate 194 is an ATP binding site. L-citrulline contacts are provided by threonine 201, glutamate 203, and glutamate 280.

Belongs to the argininosuccinate synthase family. Type 2 subfamily. Homotetramer.

The protein resides in the cytoplasm. The catalysed reaction is L-citrulline + L-aspartate + ATP = 2-(N(omega)-L-arginino)succinate + AMP + diphosphate + H(+). The protein operates within amino-acid biosynthesis; L-arginine biosynthesis; L-arginine from L-ornithine and carbamoyl phosphate: step 2/3. The polypeptide is Argininosuccinate synthase (Escherichia coli O127:H6 (strain E2348/69 / EPEC)).